The sequence spans 392 residues: RNA-binding protein 42 (392 aa).

The region spanning 293 to 371 is the RRM domain; it reads FRIFCGDLGN…RPIKLRKSQW (79 aa). The disordered stretch occupies residues 372–392; that stretch reads KDRNMDVVRKKQREKKKLGLR. Residues 381 to 392 are compositionally biased toward basic residues; sequence KKQREKKKLGLR.

This sequence belongs to the RRM RBM42 family.

The protein resides in the nucleus. It is found in the cytoplasm. Its function is as follows. May bind RNA. This Xenopus tropicalis (Western clawed frog) protein is RNA-binding protein 42 (rbm42).